We begin with the raw amino-acid sequence, 386 residues long: uncharacterized protein (386 aa).

It belongs to the TelA family.

This is an uncharacterized protein from Bacillus subtilis (strain 168).